Consider the following 154-residue polypeptide: Transmembrane protein 35B (154 aa).

Residues 1-22 form the signal peptide; that stretch reads MALLLSVLRVLLGGFFALVGLA. 3 consecutive transmembrane segments (helical) span residues 63–83, 85–105, and 112–132; these read IAVG…PPML, EISN…LAAL, and CIPA…QLLA.

This sequence belongs to the DoxX family.

It is found in the membrane. This Homo sapiens (Human) protein is Transmembrane protein 35B.